A 584-amino-acid chain; its full sequence is Glutathione hydrolase proenzyme (584 aa).

Positions 1 to 25 are cleaved as a signal peptide; it reads MAPAAMNLLCTVLYLLSSFAQVSDA. Asn-111 is a glycosylation site (N-linked (GlcNAc...) asparagine). Arg-120 provides a ligand contact to L-glutamate. N-linked (GlcNAc...) asparagine glycans are attached at residues Asn-135, Asn-262, Asn-272, Asn-350, and Asn-370. Thr-395 acts as the Nucleophile in catalysis. Residues Thr-413, Glu-434, and 465–466 contribute to the L-glutamate site; that span reads SS. Residue Asn-547 is glycosylated (N-linked (GlcNAc...) asparagine).

The protein belongs to the gamma-glutamyltransferase family. Heterodimer composed of the light and heavy chains. The active site is located in the light chain. Post-translationally, cleaved by autocatalysis into a large and a small subunit and the autocatalytic cleavage is essential to the functional activation of the enzyme.

It is found in the secreted. The enzyme catalyses an N-terminal (5-L-glutamyl)-[peptide] + an alpha-amino acid = 5-L-glutamyl amino acid + an N-terminal L-alpha-aminoacyl-[peptide]. It catalyses the reaction glutathione + H2O = L-cysteinylglycine + L-glutamate. The catalysed reaction is an S-substituted glutathione + H2O = an S-substituted L-cysteinylglycine + L-glutamate. It carries out the reaction leukotriene C4 + H2O = leukotriene D4 + L-glutamate. The protein operates within sulfur metabolism; glutathione metabolism. Its function is as follows. Cleaves the gamma-glutamyl bond of extracellular glutathione (gamma-Glu-Cys-Gly), glutathione conjugates, and other gamma-glutamyl compounds. The metabolism of glutathione releases free glutamate and the dipeptide cysteinyl-glycine, which is hydrolyzed to cysteine and glycine by dipeptidases. In the presence of high concentrations of dipeptides and some amino acids, can also catalyze a transpeptidation reaction, transferring the gamma-glutamyl moiety to an acceptor amino acid to form a new gamma-glutamyl compound. Initiates extracellular glutathione (GSH) breakdown, provides cells with a local cysteine supply and contributes to maintain intracellular GSH level. It is part of the cell antioxidant defense mechanism. The chain is Glutathione hydrolase proenzyme from Arthroderma benhamiae (strain ATCC MYA-4681 / CBS 112371) (Trichophyton mentagrophytes).